A 2605-amino-acid chain; its full sequence is Non-reducing polyketide synthase dbaI (2605 aa).

The interval 97 to 243 is N-terminal acylcarrier protein transacylase domain (SAT); the sequence is PNTLLIPLVM…PASEISDLHR (147 aa). C144 (nucleophile; for transacylase activity) is an active-site residue. H262 acts as the Proton donor/acceptor; for transacylase activity in catalysis. Residues 382 to 798 form the Ketosynthase family 3 (KS3) domain; the sequence is ENDIAVVGMS…GSNASIVVTQ (417 aa). Active-site for beta-ketoacyl synthase activity residues include C547, H682, and H721. Positions 908–1195 are malonyl-CoA:ACP transacylase (MAT) domain; the sequence is FGGQVSTFVG…VTNMASRALG (288 aa). The tract at residues 1285-1420 is N-terminal hotdog fold; the sequence is PNTLLTFVGY…GRVIFRSISD (136 aa). The PKS/mFAS DH domain occupies 1285 to 1596; sequence PNTLLTFVGY…YVKIPKASMS (312 aa). The tract at residues 1316 to 1594 is product template (PT) domain; that stretch reads LIRGHIIAQT…ISYVKIPKAS (279 aa). The active-site Proton acceptor; for dehydratase activity is the H1320. Residues 1447 to 1596 form a C-terminal hotdog fold region; the sequence is EVDEVLQNRN…YVKIPKASMS (150 aa). D1504 acts as the Proton donor; for dehydratase activity in catalysis. The Carrier domain occupies 1665–1739; that stretch reads GQLTQRIKSI…SLIKCVRKAM (75 aa). At S1699 the chain carries O-(pantetheine 4'-phosphoryl)serine. A disordered region spans residues 1742-1780; it reads DADSAEYTTEQSTSEAADSDDKSTNYTTPSTPGEEALDM. The segment covering 1747–1757 has biased composition (polar residues); the sequence is EYTTEQSTSEA. Residues 1963 to 2151 form a methyltransferase domain region; that stretch reads DWPLNRLFYR…VGYGHVDWTD (189 aa). Residues 2230–2473 are NADPH-binding (R) domain; that stretch reads VTGATGSLGC…LSWTPVDVVA (244 aa).

The enzyme catalyses 4 malonyl-CoA + acetyl-CoA + AH2 + S-adenosyl-L-methionine + 3 H(+) = 2,4-dihydroxy-3-methyl-6-(2-oxopropyl)benzaldehyde + A + S-adenosyl-L-homocysteine + 4 CO2 + 5 CoA + H2O. It functions in the pathway secondary metabolite biosynthesis. Functionally, non-reducing polyketide synthase; part of the gene cluster that mediates the biosynthesis of the antibiotic 2,4-dihydroxy-3-methyl-6-(2-oxopropyl)benzaldehyde (DHMBA) and its derivatives. The direct non-reducing polyketide synthase dbaI product is 2,4-dihydroxy-3-methyl-6-(2-oxopropyl)benzaldehyde (DHMBA), produced by condensation of one acetyl-CoA starter unit with 4 malonyl-CoA units and one methylation step. The FAD-dependent monooxygenase dbaH is responsible for the synthesis of yellow pigments derived from the oxidation of DHMBA. The roles of dbaB, C, E and F have still to be determined. The polypeptide is Non-reducing polyketide synthase dbaI (Emericella nidulans (strain FGSC A4 / ATCC 38163 / CBS 112.46 / NRRL 194 / M139) (Aspergillus nidulans)).